Consider the following 414-residue polypeptide: Putative dipeptidase TRV_05564 (414 aa).

An N-terminal signal peptide occupies residues 1 to 20 (MAALFVSLLALTSLVPVQGA). Positions 45, 47, and 157 each coordinate Zn(2+). Cys-96 and Cys-186 are oxidised to a cystine. Substrate is bound at residue His-184. His-228 and His-249 together coordinate Zn(2+). Substrate contacts are provided by Arg-260 and Asp-320. N-linked (GlcNAc...) asparagine glycosylation occurs at Asn-392.

The protein belongs to the metallo-dependent hydrolases superfamily. Peptidase M19 family. Zn(2+) is required as a cofactor.

The enzyme catalyses an L-aminoacyl-L-amino acid + H2O = 2 an L-alpha-amino acid. In terms of biological role, hydrolyzes a wide range of dipeptides. This chain is Putative dipeptidase TRV_05564, found in Trichophyton verrucosum (strain HKI 0517).